The chain runs to 296 residues: Uridine phosphorylase A (296 aa).

Phosphate is bound by residues G46, R77, and 121–124 (RLGT). Residues 125-126 (SG) and 201-203 (QGR) each bind uridine.

Belongs to the PNP/UDP phosphorylase family. In terms of assembly, homodimer.

The enzyme catalyses uridine + phosphate = alpha-D-ribose 1-phosphate + uracil. It functions in the pathway pyrimidine metabolism; UMP biosynthesis via salvage pathway; uracil from uridine (phosphorylase route): step 1/1. Functionally, catalyzes the reversible phosphorylytic cleavage of uridine and deoxyuridine to uracil and ribose- or deoxyribose-1-phosphate. The produced molecules are then utilized as carbon and energy sources or in the rescue of pyrimidine bases for nucleotide synthesis. The polypeptide is Uridine phosphorylase A (Schistosoma mansoni (Blood fluke)).